A 321-amino-acid chain; its full sequence is uncharacterized protein (321 aa).

Over residues 1–12 (MSMFLKKQKKTK) the composition is skewed to basic residues. Disordered regions lie at residues 1 to 59 (MSMF…MRKT) and 71 to 289 (EDCT…GPED). Over residues 50-59 (DGIKETMRKT) the composition is skewed to basic and acidic residues. Residues 99–115 (DDSDSESSEDGGEDDEE) show a composition bias toward acidic residues. Positions 156 to 175 (SDSSSSSSSSSDSESSSSSD) are enriched in low complexity. Basic and acidic residues predominate over residues 179–189 (DGDRSTPEPDI). The segment covering 231 to 242 (EPSPLRAAAAAA) has biased composition (low complexity).

This is an uncharacterized protein from Equus caballus (Horse).